Here is a 639-residue protein sequence, read N- to C-terminus: Sec1 family domain-containing protein 1 (639 aa).

3 positions are modified to phosphoserine: Ser34, Ser300, and Ser525.

Belongs to the STXBP/unc-18/SEC1 family. As to quaternary structure, interacts with STX17. Interacts with STX5A. Interacts with the COG complex via COG4.

The protein resides in the cytoplasm. It is found in the endoplasmic reticulum membrane. It localises to the golgi apparatus. Its subcellular location is the golgi stack membrane. Its function is as follows. Plays a role in SNARE-pin assembly and Golgi-to-ER retrograde transport via its interaction with COG4. Involved in vesicular transport between the endoplasmic reticulum and the Golgi. This is Sec1 family domain-containing protein 1 (Scfd1) from Mus musculus (Mouse).